We begin with the raw amino-acid sequence, 143 residues long: Glutaredoxin-2 (143 aa).

A mitochondrion-targeting transit peptide spans 1-30 (METNFSFDSNLIVIIIITLFATRIIAKRFL). Residue serine 37 is modified to Phosphoserine. The Glutaredoxin domain maps to 41–143 (VAHVKDLIGQ…LAEILKPVFQ (103 aa)). 58–63 (KTYCPY) contributes to the glutathione binding site. Position 61 is an S-glutathionyl cysteine; alternate (cysteine 61). A disulfide bond links cysteine 61 and cysteine 64. Serine 91 carries the phosphoserine modification. Glutathione contacts are provided by residues valine 109 and 122 to 123 (NS).

The protein belongs to the glutaredoxin family.

The protein resides in the cytoplasm. It localises to the mitochondrion. The enzyme catalyses 2 glutathione + H2O2 = glutathione disulfide + 2 H2O. It carries out the reaction 1-chloro-2,4-dinitrobenzene + glutathione = 2,4-dinitrophenyl-S-glutathione + chloride + H(+). It catalyses the reaction RX + glutathione = an S-substituted glutathione + a halide anion + H(+). Functionally, component of the glutathione system which performs several activities such as glutathione-dependent oxidoreductase, glutathione peroxidase and glutathione S-transferase (GST) activity. The disulfide bond functions as an electron carrier in the glutathione-dependent synthesis of deoxyribonucleotides by the enzyme ribonucleotide reductase. In addition, it is also involved in reducing cytosolic protein- and non-protein-disulfides in a coupled system with glutathione reductase. Required for resistance to reactive oxygen species (ROS) by directly reducing hydroperoxides and for the detoxification of ROS-mediated damage. GRX2 is more active as an oxidoreductase than GRX1. Responsible for the S-glutathionylation of DHBP synthase. The chain is Glutaredoxin-2 (GRX2) from Saccharomyces cerevisiae (strain ATCC 204508 / S288c) (Baker's yeast).